The primary structure comprises 296 residues: uncharacterized protein (296 aa).

A helical transmembrane segment spans residues 1–21 (MIFAVVDILEISIQLLCILLF).

It localises to the membrane. This is an uncharacterized protein from Caenorhabditis elegans.